The chain runs to 618 residues: Keratin, type I cytoskeletal 9 (618 aa).

The interval 1 to 49 is disordered; it reads MSFRQISSSFRSSSGSSCGGGGGRGASRGSMRSSFGRSSRAGGESRFGS. The segment at 1–137 is head; that stretch reads MSFRQISSSF…GGEGSILNTN (137 aa). A compositionally biased stretch (low complexity) spans 7-16; that stretch reads SSSFRSSSGS. 2 positions are modified to phosphoserine: S14 and S17. Residues 17–26 show a composition bias toward gly residues; it reads SCGGGGGRGA. Low complexity predominate over residues 27 to 49; sequence SRGSMRSSFGRSSRAGGESRFGS. Residues 138–173 form a coil 1A region; sequence EKVVMQNLNSRLASYMDKVQELEEDNANLEKQIQEW. In terms of domain architecture, IF rod spans 138-450; the sequence is EKVVMQNLNS…KLLEGGQQDF (313 aa). Residues 174–192 are linker 1; that stretch reads YSRKGNRVFQKDYSHYYNT. A coil 1B region spans residues 193 to 284; that stretch reads IEDLKDRIVD…KSHKEEMNQL (92 aa). The tract at residues 285–307 is linker 12; it reads TGLNDGDVNVEINVAPSTDLTQV. The tract at residues 308–446 is coil 2; the sequence is LNDMREEYEH…ETYRKLLEGG (139 aa). The segment at 447–609 is tail; sequence QQDFESSGAG…GGGNTRPSQS (163 aa). Residues 449 to 618 form a disordered region; the sequence is DFESSGAGQI…SQSSQIPRLR (170 aa). The span at 456–603 shows a compositional bias: gly residues; that stretch reads GQIGFGSGKG…GSGGSYGGGN (148 aa). Over residues 607–618 the composition is skewed to low complexity; sequence SQSQSSQIPRLR.

Belongs to the intermediate filament family. In terms of assembly, heterotetramer of two type I and two type II keratins. In terms of tissue distribution, expressed in the perinuclear ring of spermatid manchettes within testis and in keratinocytes of the suprabasal layer of footpad epidermis (at protein level).

Functionally, may serve an important special function either in the mature palmar and plantar skin tissue or in the morphogenetic program of the formation of these tissues. Plays a role in keratin filament assembly. May be involved in spermatid nuclear shaping and sperm development. This Rattus norvegicus (Rat) protein is Keratin, type I cytoskeletal 9 (Krt9).